The sequence spans 144 residues: Large ribosomal subunit protein uL15 (144 aa).

The disordered stretch occupies residues 1 to 57; sequence MELNNLKPAEGAKHAKRRVGRGIGSGLGKTAGRGHKGQKSRSGGFHKVGFEGGQMPL. Gly residues predominate over residues 21–31; the sequence is RGIGSGLGKTA.

It belongs to the universal ribosomal protein uL15 family. Part of the 50S ribosomal subunit.

Binds to the 23S rRNA. This Paraburkholderia xenovorans (strain LB400) protein is Large ribosomal subunit protein uL15.